A 74-amino-acid chain; its full sequence is Kappa-stichotoxin-Sgt4a (74 aa).

A signal peptide spans 1–22 (MKFQVIAAVLLIEFCLCVVVTA). The propeptide occupies 23-39 (RMELQDVEDVENGFQKR). The region spanning 42–74 (CIDTIPQSRCTAFQCKHSMKYRLSFCRKTCGTC) is the ShKT domain. 3 cysteine pairs are disulfide-bonded: C42-C74, C51-C67, and C56-C71.

The protein belongs to the sea anemone type 1 potassium channel toxin family. Type 1a subfamily.

The protein resides in the secreted. The protein localises to the nematocyst. In terms of biological role, inhibits voltage-gated potassium channels (Kv) with higher potency for Kv1.1/KCNA1 and Kv1.3/KCNA3. The chain is Kappa-stichotoxin-Sgt4a from Stichodactyla gigantea (Giant carpet anemone).